Reading from the N-terminus, the 508-residue chain is Pancreatic alpha-amylase 2a5 (508 aa).

Positions 1-15 are cleaved as a signal peptide; sequence MKFVLLLSLIGFCWA. Gln-16 carries the pyrrolidone carboxylic acid modification. Disulfide bonds link Cys-43/Cys-101, Cys-85/Cys-130, and Cys-156/Cys-172. Ca(2+) contacts are provided by Asn-115, Arg-170, and Asp-179. Arg-207 contributes to the chloride binding site. The Nucleophile role is filled by Asp-209. Residue His-213 participates in Ca(2+) binding. Residue Glu-245 is the Proton donor of the active site. Asn-310 and Arg-349 together coordinate chloride. Cystine bridges form between Cys-390/Cys-396 and Cys-462/Cys-474.

The protein belongs to the glycosyl hydrolase 13 family. Monomer. Ca(2+) is required as a cofactor. The cofactor is chloride.

It is found in the secreted. It localises to the extracellular space. It catalyses the reaction Endohydrolysis of (1-&gt;4)-alpha-D-glucosidic linkages in polysaccharides containing three or more (1-&gt;4)-alpha-linked D-glucose units.. This chain is Pancreatic alpha-amylase 2a5, found in Mus musculus (Mouse).